Reading from the N-terminus, the 1084-residue chain is MLIFFFFFFFFKYIYNIFILTCFYITLSSYYFIISFIFSTLMFFYFCTFYVISLFFLYISSFCKSIKVTQLYDKKIKIKSFINNYLVSCRKKKYIYNNVDDKSNIGTFNLYHNIRDNNNNNNNNDNNNNLKKRDDVLFPLCNKNIINDVQKIYDEVNNIKDKEQKINYLMEQCSSLCKENYFPPILNLNKAYRNKRIDEFNKGNKNFYINEVGKNIWYKYVNRCDEILFMAIDIQIDEDEQRNNSIKDVHDVHDDNIKTCTLIKDDKHFEKYKDIHNDNILKNILPLDKKIDSIKNMLNHKYMKKKKCIITIDAYSNNLILYCFLYLILKHINKMYLYSFMNIQIKEITAKLKELFDLHFNVHHIIDYIHEYIYNFLMSYHIKRKKNKSKNMKEKDIKNVFANNIIISDEENKHISKESSDMYKKKTTITTTTTTKKKKNTMKLFTYPRIAHMLSGGVDSLMALHLLERKKFYVDNYFFNFTNADCSKNDIKYVKDICKNNKRNLFIININDEYFDEVLVPMLFFYADGKVPNPDIMCNQKIKYNFFLKVIKSIYKQKWNYRTKSKLCNYDFISTGHYAMIRTNDKNNPNNIFNNNLFIKKKKKKIKNIKNKKNIKNKNNIKNKNNNNNIYTYNIYNLHNDNIKTNYKKNNKYFYKLLVSNDKKKDQTFFLSSFNHIQLSKFIFPLSLYTKKDVKKYMNENNINNYNHKETKGLCLFGNIDMQTLLHKYFVNTEKDDIKNKQNEDNIFKENNILNLNNNFNQNEKKKKKEKKLLVDITTTSSHLKKFRETFIPKMNLHYKNYLINLDDQTILDINSDIHLYAIGQHKNVTNYLHNLYNKKMININGYKKKHVKNVISSFQWIVVYKKIKRDMSTNLIHNFIYLTKNYDQDLFTHIRTKCKLHNIKWIEGKLPACIKKQFKKYNKINKKKKKINNNNNKYKTNETFHVYNNIQESGKKKKKKKVKNIPHDEKTIFVKIRNSEQIKKAKIKFSLSNNTAYLKVKQKDTGFSPGQIITLYFPFIIKKNNKVTYITNLNKYNNLINTNKNTIYYHCLGSATISNQFLDYNLYQHIKNIHQINDLNMSK.

The next 3 helical transmembrane spans lie at 1 to 21, 32 to 52, and 309 to 329; these read MLIF…FILT, FIIS…FYVI, and IITI…YLIL. Cys-538 functions as the Nucleophile in the catalytic mechanism. Cysteines 538 and 715 form a disulfide. The Cysteine persulfide intermediate role is filled by Cys-715.

The protein belongs to the MnmA/TRMU family.

The protein localises to the plastid. It is found in the apicoplast. Its subcellular location is the membrane. It carries out the reaction S-sulfanyl-L-cysteinyl-[protein] + uridine(34) in tRNA + AH2 + ATP = 2-thiouridine(34) in tRNA + L-cysteinyl-[protein] + A + AMP + diphosphate + H(+). Catalyzes the 2-thiolation of uridine at the wobble position (U34) of tRNA, leading to the formation of s(2)U34. Required for apicoplast maintenance. In Plasmodium falciparum (isolate 3D7), this protein is Putative tRNA-specific 2-thiouridylase.